Here is a 204-residue protein sequence, read N- to C-terminus: Large ribosomal subunit protein uL13 (204 aa).

Belongs to the universal ribosomal protein uL13 family.

In Choristoneura parallela (Spotted fireworm moth), this protein is Large ribosomal subunit protein uL13 (RpL13A).